Reading from the N-terminus, the 1461-residue chain is Selection and upkeep of intraepithelial T-cells protein 5 (1461 aa).

Residues 1–24 form the signal peptide; that stretch reads MGAVGIPLTAHCVVLFLLQMVALS. At 25–1306 the chain is on the extracellular side; the sequence is SEQFTVNGLE…CNKRNPFWKK (1282 aa). Residues 26–139 form the Ig-like V-type domain; it reads EQFTVNGLES…FYEEHIIDVK (114 aa). Intrachain disulfides connect cysteine 49-cysteine 123 and cysteine 163-cysteine 217. An Ig-like C1-type domain is found at 142–231; sequence ATSSDIQILM…FVTHQEESIS (90 aa). N-linked (GlcNAc...) asparagine glycosylation occurs at asparagine 200. Residues 1307–1327 traverse the membrane as a helical segment; the sequence is YALDLGISVFTIIVVTLIMHL. The Cytoplasmic segment spans residues 1328-1345; the sequence is KQREADQHFELNTLWSKD. Residues 1346–1366 form a helical membrane-spanning segment; sequence TSVILCVLIMFNNRLKALIYF. The Extracellular segment spans residues 1367–1387; it reads RLYGFSPPGKAHKYIVNYILR. The helical transmembrane segment at 1388–1408 threads the bilayer; it reads FSHPVFCIVYSATILYMYLQI. The Cytoplasmic segment spans residues 1409–1427; it reads QNKDSLFSLYNSWMVEMEM. Residues 1428-1448 traverse the membrane as a helical segment; that stretch reads VLIFLLVIFNVKNIATVLLYF. The Extracellular segment spans residues 1449 to 1461; the sequence is DSTTLRLFFWIKG.

This sequence belongs to the SKINT family. Expressed in skin and, to a lower extent, testis.

The protein localises to the membrane. Functionally, may act by engaging a cell surface molecule on immature T-cells in the embryonic thymus. In Mus musculus (Mouse), this protein is Selection and upkeep of intraepithelial T-cells protein 5 (Skint5).